A 122-amino-acid polypeptide reads, in one-letter code: Basic phospholipase A2 PL-X (122 aa).

7 disulfides stabilise this stretch: Cys26-Cys115, Cys28-Cys44, Cys43-Cys95, Cys49-Cys122, Cys50-Cys88, Cys57-Cys81, and Cys75-Cys86. Ca(2+)-binding residues include Tyr27, Gly29, and Gly31. The active site involves His47. Asp48 contributes to the Ca(2+) binding site. The active site involves Asp89.

It belongs to the phospholipase A2 family. Group II subfamily. D49 sub-subfamily. It depends on Ca(2+) as a cofactor. Expressed by the venom gland.

Its subcellular location is the secreted. It catalyses the reaction a 1,2-diacyl-sn-glycero-3-phosphocholine + H2O = a 1-acyl-sn-glycero-3-phosphocholine + a fatty acid + H(+). Its function is as follows. PLA2 catalyzes the calcium-dependent hydrolysis of the 2-acyl groups in 3-sn-phosphoglycerides. This Protobothrops flavoviridis (Habu) protein is Basic phospholipase A2 PL-X.